Reading from the N-terminus, the 234-residue chain is Leucyl/phenylalanyl-tRNA--protein transferase (234 aa).

This sequence belongs to the L/F-transferase family.

It is found in the cytoplasm. It carries out the reaction N-terminal L-lysyl-[protein] + L-leucyl-tRNA(Leu) = N-terminal L-leucyl-L-lysyl-[protein] + tRNA(Leu) + H(+). The enzyme catalyses N-terminal L-arginyl-[protein] + L-leucyl-tRNA(Leu) = N-terminal L-leucyl-L-arginyl-[protein] + tRNA(Leu) + H(+). The catalysed reaction is L-phenylalanyl-tRNA(Phe) + an N-terminal L-alpha-aminoacyl-[protein] = an N-terminal L-phenylalanyl-L-alpha-aminoacyl-[protein] + tRNA(Phe). Functionally, functions in the N-end rule pathway of protein degradation where it conjugates Leu, Phe and, less efficiently, Met from aminoacyl-tRNAs to the N-termini of proteins containing an N-terminal arginine or lysine. The sequence is that of Leucyl/phenylalanyl-tRNA--protein transferase from Escherichia coli O45:K1 (strain S88 / ExPEC).